The sequence spans 393 residues: NAD(P)H-quinone oxidoreductase subunit H, chloroplastic (393 aa).

It belongs to the complex I 49 kDa subunit family. As to quaternary structure, NDH is composed of at least 16 different subunits, 5 of which are encoded in the nucleus.

The protein localises to the plastid. It localises to the chloroplast thylakoid membrane. It catalyses the reaction a plastoquinone + NADH + (n+1) H(+)(in) = a plastoquinol + NAD(+) + n H(+)(out). The catalysed reaction is a plastoquinone + NADPH + (n+1) H(+)(in) = a plastoquinol + NADP(+) + n H(+)(out). NDH shuttles electrons from NAD(P)H:plastoquinone, via FMN and iron-sulfur (Fe-S) centers, to quinones in the photosynthetic chain and possibly in a chloroplast respiratory chain. The immediate electron acceptor for the enzyme in this species is believed to be plastoquinone. Couples the redox reaction to proton translocation, and thus conserves the redox energy in a proton gradient. In Crucihimalaya wallichii (Rock-cress), this protein is NAD(P)H-quinone oxidoreductase subunit H, chloroplastic.